The chain runs to 330 residues: Nodulation protein D 2 (330 aa).

In terms of domain architecture, HTH lysR-type spans 6–63; it reads LDLNLLVALDALITERNLSSAARKINLSQPAMSAAVARLRKHFRDELFGMRGRELVLS. The H-T-H motif DNA-binding region spans 23–42; it reads LSSAARKINLSQPAMSAAVA. A disordered region spans residues 308–330; the sequence is RVTSSPEDAEPPGHFVRSVSPLP.

Belongs to the LysR transcriptional regulatory family.

In terms of biological role, nodD regulates the expression of the nodABCFE genes which encode other nodulation proteins. NodD is also a negative regulator of its own expression. Binds flavonoids as inducers. The protein is Nodulation protein D 2 (nodD2) of Bradyrhizobium diazoefficiens (strain JCM 10833 / BCRC 13528 / IAM 13628 / NBRC 14792 / USDA 110).